Here is a 156-residue protein sequence, read N- to C-terminus: Cell division protein SepF (156 aa).

Residues 23 to 36 are compositionally biased toward basic and acidic residues; that stretch reads SYEKEQTDMKKQQD. Residues 23-48 are disordered; the sequence is SYEKEQTDMKKQQDPPEQQDVTFPKA. The segment covering 37 to 48 has biased composition (polar residues); it reads PPEQQDVTFPKA.

It belongs to the SepF family. In terms of assembly, homodimer. Interacts with FtsZ.

It localises to the cytoplasm. In terms of biological role, cell division protein that is part of the divisome complex and is recruited early to the Z-ring. Probably stimulates Z-ring formation, perhaps through the cross-linking of FtsZ protofilaments. Its function overlaps with FtsA. The chain is Cell division protein SepF from Bacillus cereus (strain ATCC 10987 / NRS 248).